Consider the following 509-residue polypeptide: Maturase K (509 aa).

The protein belongs to the intron maturase 2 family. MatK subfamily.

It localises to the plastid. The protein resides in the chloroplast. Its function is as follows. Usually encoded in the trnK tRNA gene intron. Probably assists in splicing its own and other chloroplast group II introns. The polypeptide is Maturase K (Anthocercis viscosa (Sticky tailflower)).